A 252-amino-acid chain; its full sequence is Probable transcriptional regulatory protein Bcav_1989 (252 aa).

It belongs to the TACO1 family.

The protein resides in the cytoplasm. In Beutenbergia cavernae (strain ATCC BAA-8 / DSM 12333 / CCUG 43141 / JCM 11478 / NBRC 16432 / NCIMB 13614 / HKI 0122), this protein is Probable transcriptional regulatory protein Bcav_1989.